The chain runs to 257 residues: Imidazole glycerol phosphate synthase subunit HisF (257 aa).

Active-site residues include D11 and D130.

This sequence belongs to the HisA/HisF family. As to quaternary structure, heterodimer of HisH and HisF.

The protein localises to the cytoplasm. The enzyme catalyses 5-[(5-phospho-1-deoxy-D-ribulos-1-ylimino)methylamino]-1-(5-phospho-beta-D-ribosyl)imidazole-4-carboxamide + L-glutamine = D-erythro-1-(imidazol-4-yl)glycerol 3-phosphate + 5-amino-1-(5-phospho-beta-D-ribosyl)imidazole-4-carboxamide + L-glutamate + H(+). Its pathway is amino-acid biosynthesis; L-histidine biosynthesis; L-histidine from 5-phospho-alpha-D-ribose 1-diphosphate: step 5/9. Functionally, IGPS catalyzes the conversion of PRFAR and glutamine to IGP, AICAR and glutamate. The HisF subunit catalyzes the cyclization activity that produces IGP and AICAR from PRFAR using the ammonia provided by the HisH subunit. The polypeptide is Imidazole glycerol phosphate synthase subunit HisF (Trichormus variabilis (strain ATCC 29413 / PCC 7937) (Anabaena variabilis)).